A 1262-amino-acid chain; its full sequence is Cytoplasmic FMR1-interacting protein homolog (1262 aa).

The disordered stretch occupies residues Leu-519–Arg-550.

Belongs to the CYFIP family. Interacts with gex-3.

The protein resides in the cytoplasm. Required for initial steps of body morphogenesis. May play a role in egg laying and yolk protein clatherin-mediated endocytosis by oocytes during oogenesis. Plays a role in the formation of muscle connections, also called muscle arm extensions, between the body wall and the motor axons in the dorsal and ventral cord. The sequence is that of Cytoplasmic FMR1-interacting protein homolog from Caenorhabditis elegans.